Reading from the N-terminus, the 535-residue chain is Berberine bridge enzyme-like 27 (535 aa).

Positions 1-22 (MEILRFLLSLFIYFLLLNLSLS) are cleaved as a signal peptide. N-linked (GlcNAc...) asparagine glycans are attached at residues N18 and N66. C40 and C100 form a disulfide bridge. The 176-residue stretch at 78–253 (ETPKPVSIIT…LSWKIRLLDV (176 aa)) folds into the FAD-binding PCMH-type domain. H115 is modified (pros-8alpha-FAD histidine). N-linked (GlcNAc...) asparagine glycans are attached at residues N146, N215, and N439.

It belongs to the oxygen-dependent FAD-linked oxidoreductase family. FAD is required as a cofactor. In terms of tissue distribution, accumulates in cell walls of etiolated hypocotyls.

The protein resides in the secreted. Its subcellular location is the cell wall. This is Berberine bridge enzyme-like 27 from Arabidopsis thaliana (Mouse-ear cress).